The following is a 718-amino-acid chain: uncharacterized protein (718 aa).

6 helical membrane passes run 9–29 (VIST…IWFF), 60–80 (NVFF…LHIG), 83–103 (IQYI…GAVG), 136–156 (VMIL…YLFF), 391–411 (IVVF…GYWI), and 506–526 (LLDT…LWPD).

It belongs to the YccS/YhfK family.

Its subcellular location is the cell membrane. This is an uncharacterized protein from Haemophilus influenzae (strain ATCC 51907 / DSM 11121 / KW20 / Rd).